Reading from the N-terminus, the 262-residue chain is Thrombin-like enzyme gyroxin B1.3 (262 aa).

Residues 1-18 (MVLIRVLANLLILQLSYA) form the signal peptide. The propeptide occupies 19-262 (QKSSELVIGG…AGSETVNCPS (244 aa)). Residues 25–253 (VIGGDECNIN…HLDWIQNIIA (229 aa)) form the Peptidase S1 domain. 6 disulfide bridges follow: Cys-31–Cys-165, Cys-52–Cys-68, Cys-102–Cys-260, Cys-144–Cys-214, Cys-176–Cys-193, and Cys-204–Cys-229. His-67 acts as the Charge relay system in catalysis. A glycan (N-linked (GlcNAc...) asparagine) is linked at Asn-105. The active-site Charge relay system is Asp-112. Residue Ser-208 is the Charge relay system of the active site.

The protein belongs to the peptidase S1 family. Snake venom subfamily. In terms of assembly, monomer. Expressed by the venom gland.

It localises to the secreted. Functionally, thrombin-like snake venom serine protease. Displays a specificity similar to trypsin. Releases only fibrinopeptide A in the conversion of fibrinogen to fibrin. Reversibly increases the permeability of the blood brain barrier (BBB) in mice. Induces the barrel rotation syndrome in mice, which is manifested by gyroxin-like, rapid rolling motions. This syndrome may be due to its effect on BBB permeability, and certainly also to other actions affecting endogenous substrates present in the endothelium, nervous tissues or blood. Also shows a moderate inhibitory activity on the human voltage-gated potassium channel Kv10.1/KCNH1/EAG1 (58% current inhibition at 5 uM). It blocks Kv10.1/KCNH1/EAG1 in a time and dose-dependent manner and with a mechanism independent of its enzymatic activity. It may have a preference in interacting with Kv10.1/KCNH1/EAG1 in its closed state, since the inhibitory effect of the toxin is decreased at more depolarized potentials. The chain is Thrombin-like enzyme gyroxin B1.3 from Crotalus durissus terrificus (South American rattlesnake).